A 119-amino-acid chain; its full sequence is Large ribosomal subunit protein bL20 (119 aa).

It belongs to the bacterial ribosomal protein bL20 family.

Its function is as follows. Binds directly to 23S ribosomal RNA and is necessary for the in vitro assembly process of the 50S ribosomal subunit. It is not involved in the protein synthesizing functions of that subunit. The chain is Large ribosomal subunit protein bL20 from Nitrosococcus oceani (strain ATCC 19707 / BCRC 17464 / JCM 30415 / NCIMB 11848 / C-107).